Consider the following 997-residue polypeptide: Mannuronan C5-epimerase AlgE5 (997 aa).

PbH1 repeat units lie at residues 133 to 155 (DRDV…DPHE), 157 to 179 (TINL…VADF), 180 to 202 (QIGG…NIVT), 204 to 226 (TNDF…VIQR), 257 to 279 (AHDV…RVYG), 280 to 315 (AEDV…GVSG), and 320 to 359 (TTGT…SVSN). 10 Hemolysin-type calcium-binding repeats span residues 388–403 (GTTG…AHET), 406–422 (GLDG…NDIL), 424–439 (GGAG…GADL), 557–573 (GHAG…DDIL), 574–590 (VGGA…GADL), 695–709 (GSAG…AADE), 712–729 (HGGA…ADVF), 828–839 (GSDGNDTLDGGS), 846–862 (GGAG…NDIL), and 864–880 (GGAG…SDIF).

Belongs to the D-mannuronate C5-epimerase family. It depends on Ca(2+) as a cofactor.

The protein localises to the secreted. It carries out the reaction [(1-&gt;4)-beta-D-mannuronosyl](n) = [alginate](n). The protein operates within glycan biosynthesis; alginate biosynthesis. Inhibited by zinc. In terms of biological role, converts beta-D-mannuronic acid (M) to alpha-L-guluronic acid (G), producing a polymer with gel-forming capacity, required for the formation of the cyst coat. This is Mannuronan C5-epimerase AlgE5 from Azotobacter vinelandii.